We begin with the raw amino-acid sequence, 131 residues long: Large ribosomal subunit protein bL12 (131 aa).

This sequence belongs to the bacterial ribosomal protein bL12 family. In terms of assembly, homodimer. Part of the ribosomal stalk of the 50S ribosomal subunit. Forms a multimeric L10(L12)X complex, where L10 forms an elongated spine to which 2 to 4 L12 dimers bind in a sequential fashion. Binds GTP-bound translation factors.

In terms of biological role, forms part of the ribosomal stalk which helps the ribosome interact with GTP-bound translation factors. Is thus essential for accurate translation. This Parasynechococcus marenigrum (strain WH8102) protein is Large ribosomal subunit protein bL12.